The chain runs to 683 residues: MADLEKMIEEFTKLRDQISYHDVLYHQKSKPEIADAEYDKLKQKLVEMEGQLPGACVTQDGVGAAPDEKFSKIKHREPMLSLENAYDEQGVERFLSRIKRFLIEEEIEVFCEPKIDGLSFSAVYEDGRFVKAATRGDGFIGEDVTRNVATIKGFPRFLQDVQDRLEVRGEIYINNSDFLKLNKDNEFANPRNAAAGSLKQLDVSITANRPLKYFAYSLIGGKEKSQSEVLNRLESLGFCVNEHRSLTNNLSGMLEFYNKVYNCRYSLDYDIDGIVYKVNDLILQSRLGSTHKAPRSALAYKFSAVYAKTKLNKIFIQVGRTGVLTPVADLIPVNIGGVLVSRANLHNQDEIKRKDVREGDIVTIKRAGDVIPQIVRVDKGSRHADAPGFVFPEICPECGGKVQAEGAAIRCSEELTCKAQIIGKLSHFVSKGAFDIFGLGEKQIKFFYDLGLIKQIPDIFNLEERLNEFSLKEQPDWGERSIANLLNAIQNRRVITLDRFIFSLGIRFIGQVAAELLANYYVSYNNWYNSMIKLLSNDAEVGVGGVEKKIAKSFSDELVGIDGIGEKVAESLKSFFSKEHNIKMLKDLTDYLQILSVNSNSSNSVLNNKVIVFTGKLLTMSRGEAKVRAKALGAKVSSNLSAKIDYLVAGEKPGNKYKKAVELGVGILNEDQWYRMINSEVSE.

NAD(+)-binding positions include 35-39, 81-82, and Glu-112; these read DAEYD and SL. The active-site N6-AMP-lysine intermediate is the Lys-114. The NAD(+) site is built by Arg-135, Glu-170, Lys-277, and Lys-301. 4 residues coordinate Zn(2+): Cys-395, Cys-398, Cys-411, and Cys-417. The region spanning 601–683 is the BRCT domain; that stretch reads SSNSVLNNKV…YRMINSEVSE (83 aa).

It belongs to the NAD-dependent DNA ligase family. LigA subfamily. Mg(2+) serves as cofactor. Requires Mn(2+) as cofactor.

The catalysed reaction is NAD(+) + (deoxyribonucleotide)n-3'-hydroxyl + 5'-phospho-(deoxyribonucleotide)m = (deoxyribonucleotide)n+m + AMP + beta-nicotinamide D-nucleotide.. Functionally, DNA ligase that catalyzes the formation of phosphodiester linkages between 5'-phosphoryl and 3'-hydroxyl groups in double-stranded DNA using NAD as a coenzyme and as the energy source for the reaction. It is essential for DNA replication and repair of damaged DNA. This is DNA ligase from Wolbachia sp. subsp. Brugia malayi (strain TRS).